The sequence spans 216 residues: DNA-directed RNA polymerase subunit alpha (216 aa).

This sequence belongs to the RNA polymerase alpha chain family. In plastids the minimal PEP RNA polymerase catalytic core is composed of four subunits: alpha, beta, beta', and beta''. When a (nuclear-encoded) sigma factor is associated with the core the holoenzyme is formed, which can initiate transcription.

The protein localises to the plastid. The protein resides in the chloroplast. It catalyses the reaction RNA(n) + a ribonucleoside 5'-triphosphate = RNA(n+1) + diphosphate. Functionally, DNA-dependent RNA polymerase catalyzes the transcription of DNA into RNA using the four ribonucleoside triphosphates as substrates. The polypeptide is DNA-directed RNA polymerase subunit alpha (rpoA) (Euglena granulata).